We begin with the raw amino-acid sequence, 325 residues long: Elongation factor P--(R)-beta-lysine ligase (325 aa).

76–78 (SPE) is a binding site for substrate. ATP is bound by residues 100 to 102 (RNE) and N109. Y118 is a substrate binding site. Residue 244–245 (EL) coordinates ATP. Residue E251 participates in substrate binding. G300 contacts ATP.

This sequence belongs to the class-II aminoacyl-tRNA synthetase family. EpmA subfamily. In terms of assembly, homodimer.

The catalysed reaction is D-beta-lysine + L-lysyl-[protein] + ATP = N(6)-((3R)-3,6-diaminohexanoyl)-L-lysyl-[protein] + AMP + diphosphate + H(+). Functionally, with EpmB is involved in the beta-lysylation step of the post-translational modification of translation elongation factor P (EF-P). Catalyzes the ATP-dependent activation of (R)-beta-lysine produced by EpmB, forming a lysyl-adenylate, from which the beta-lysyl moiety is then transferred to the epsilon-amino group of a conserved specific lysine residue in EF-P. This Citrobacter koseri (strain ATCC BAA-895 / CDC 4225-83 / SGSC4696) protein is Elongation factor P--(R)-beta-lysine ligase.